We begin with the raw amino-acid sequence, 216 residues long: Probable GTP-binding protein EngB (216 aa).

The 185-residue stretch at 26 to 210 (PMATIIFAGR…KNRIFEVIRE (185 aa)) folds into the EngB-type G domain. GTP is bound by residues 34 to 41 (GRSNVGKS), 59 to 63 (GVTRK), 76 to 79 (DMPG), 156 to 159 (NKLD), and 189 to 191 (ISA). Positions 41 and 61 each coordinate Mg(2+).

It belongs to the TRAFAC class TrmE-Era-EngA-EngB-Septin-like GTPase superfamily. EngB GTPase family. The cofactor is Mg(2+).

Its function is as follows. Necessary for normal cell division and for the maintenance of normal septation. This is Probable GTP-binding protein EngB from Pyrococcus horikoshii (strain ATCC 700860 / DSM 12428 / JCM 9974 / NBRC 100139 / OT-3).